Here is a 428-residue protein sequence, read N- to C-terminus: Enolase (428 aa).

A (2R)-2-phosphoglycerate-binding site is contributed by Q163. E205 (proton donor) is an active-site residue. 3 residues coordinate Mg(2+): D242, E285, and D312. Residues K337, R366, S367, and K388 each coordinate (2R)-2-phosphoglycerate. The Proton acceptor role is filled by K337.

Belongs to the enolase family. Mg(2+) serves as cofactor.

The protein resides in the cytoplasm. Its subcellular location is the secreted. It is found in the cell surface. The enzyme catalyses (2R)-2-phosphoglycerate = phosphoenolpyruvate + H2O. It participates in carbohydrate degradation; glycolysis; pyruvate from D-glyceraldehyde 3-phosphate: step 4/5. In terms of biological role, catalyzes the reversible conversion of 2-phosphoglycerate (2-PG) into phosphoenolpyruvate (PEP). It is essential for the degradation of carbohydrates via glycolysis. The polypeptide is Enolase (Finegoldia magna (strain ATCC 29328 / DSM 20472 / WAL 2508) (Peptostreptococcus magnus)).